Reading from the N-terminus, the 877-residue chain is DNA polymerase I (877 aa).

Residues methionine 1 to glutamate 310 enclose the 5'-3' exonuclease domain. Residues methionine 311–leucine 465 enclose the 3'-5' exonuclease domain. The interval glutamate 469–lysine 877 is polymerase.

This sequence belongs to the DNA polymerase type-A family. As to quaternary structure, single-chain monomer with multiple functions.

The enzyme catalyses DNA(n) + a 2'-deoxyribonucleoside 5'-triphosphate = DNA(n+1) + diphosphate. In addition to polymerase activity, this DNA polymerase exhibits 3'-5' and 5'-3' exonuclease activity. This is DNA polymerase I (polA) from Bacillus caldotenax.